Consider the following 87-residue polypeptide: Cytochrome c6 (87 aa).

Heme c is bound by residues Cys-10, Cys-13, His-14, and Met-56.

The protein belongs to the cytochrome c family. PetJ subfamily. Monomer. In terms of processing, binds 1 heme c group covalently per subunit.

The protein resides in the plastid. The protein localises to the chloroplast thylakoid lumen. Functionally, functions as an electron carrier between membrane-bound cytochrome b6-f and photosystem I in oxygenic photosynthesis. The sequence is that of Cytochrome c6 (petJ) from Euglena gracilis.